The primary structure comprises 338 residues: 1-aminocyclopropane-1-carboxylate deaminase (338 aa).

Residue lysine 51 is modified to N6-(pyridoxal phosphate)lysine. Serine 78 functions as the Nucleophile in the catalytic mechanism.

It belongs to the ACC deaminase/D-cysteine desulfhydrase family. Homotrimer. It depends on pyridoxal 5'-phosphate as a cofactor.

The catalysed reaction is 1-aminocyclopropane-1-carboxylate + H2O = 2-oxobutanoate + NH4(+). Catalyzes a cyclopropane ring-opening reaction, the irreversible conversion of 1-aminocyclopropane-1-carboxylate (ACC) to ammonia and alpha-ketobutyrate. Allows growth on ACC as a nitrogen source. This Pseudomonas syringae pv. syringae (strain B728a) protein is 1-aminocyclopropane-1-carboxylate deaminase.